A 372-amino-acid polypeptide reads, in one-letter code: Aminomethyltransferase (372 aa).

This sequence belongs to the GcvT family. In terms of assembly, the glycine cleavage system is composed of four proteins: P, T, L and H.

It catalyses the reaction N(6)-[(R)-S(8)-aminomethyldihydrolipoyl]-L-lysyl-[protein] + (6S)-5,6,7,8-tetrahydrofolate = N(6)-[(R)-dihydrolipoyl]-L-lysyl-[protein] + (6R)-5,10-methylene-5,6,7,8-tetrahydrofolate + NH4(+). Functionally, the glycine cleavage system catalyzes the degradation of glycine. This is Aminomethyltransferase from Streptomyces avermitilis (strain ATCC 31267 / DSM 46492 / JCM 5070 / NBRC 14893 / NCIMB 12804 / NRRL 8165 / MA-4680).